Here is a 94-residue protein sequence, read N- to C-terminus: UPF0235 protein TK0768 (94 aa).

The protein belongs to the UPF0235 family.

The protein is UPF0235 protein TK0768 of Thermococcus kodakarensis (strain ATCC BAA-918 / JCM 12380 / KOD1) (Pyrococcus kodakaraensis (strain KOD1)).